The following is a 488-amino-acid chain: MIDFDGLSNAFSGQTVLCVGDLMLDEFVYGEISRISPEAPAPVIAVQRSETNVGGAGNVARNIAALGARCIFVGLAGEDDAGARLRDTLSRERLIEPLLISDPARSTTRKVRFVSEHFSTHMLRADWETLAPASGEVEQALIDAILPQLPCADIVLLSDYAKGVLTTRVIRSVIDGARRLGKRVIVDPKSADFGIYRGATLLTPNSKEFTDATGRRADDQASLAKAARDLMRIAECEALLVTQSERGMTLVPGEGEVIHVPAHTVKVRDVTGAGDTVVATLAVSLAAGADWEAALRTASAAAAVAVAKSGTAIVTLAELRRNILPPASLAAEEKIARSAGDLDQHLTAWREQGLRIGFTNGCFDILHPGHVKVLTGARAACDRLIVGLNSDASVKRLKGEGRPIQNERARAEVLAALEAVDLVAIFEEDTPLNLIGRIQPNVLVKGGDYSLEQVVGQELVTARGGEVILIDILQGFSTTSLVKRAGGA.

The interval 1–330 (MIDFDGLSNA…RNILPPASLA (330 aa)) is ribokinase. Position 205-208 (205-208 (NSKE)) interacts with ATP. Aspartate 275 is an active-site residue. Positions 358–488 (FTNGCFDILH…TSLVKRAGGA (131 aa)) are cytidylyltransferase.

It in the N-terminal section; belongs to the carbohydrate kinase PfkB family. In the C-terminal section; belongs to the cytidylyltransferase family. In terms of assembly, homodimer.

The enzyme catalyses D-glycero-beta-D-manno-heptose 7-phosphate + ATP = D-glycero-beta-D-manno-heptose 1,7-bisphosphate + ADP + H(+). It carries out the reaction D-glycero-beta-D-manno-heptose 1-phosphate + ATP + H(+) = ADP-D-glycero-beta-D-manno-heptose + diphosphate. The protein operates within nucleotide-sugar biosynthesis; ADP-L-glycero-beta-D-manno-heptose biosynthesis; ADP-L-glycero-beta-D-manno-heptose from D-glycero-beta-D-manno-heptose 7-phosphate: step 1/4. It participates in nucleotide-sugar biosynthesis; ADP-L-glycero-beta-D-manno-heptose biosynthesis; ADP-L-glycero-beta-D-manno-heptose from D-glycero-beta-D-manno-heptose 7-phosphate: step 3/4. Functionally, catalyzes the phosphorylation of D-glycero-D-manno-heptose 7-phosphate at the C-1 position to selectively form D-glycero-beta-D-manno-heptose-1,7-bisphosphate. In terms of biological role, catalyzes the ADP transfer from ATP to D-glycero-beta-D-manno-heptose 1-phosphate, yielding ADP-D-glycero-beta-D-manno-heptose. This is Bifunctional protein HldE from Nitrobacter winogradskyi (strain ATCC 25391 / DSM 10237 / CIP 104748 / NCIMB 11846 / Nb-255).